Reading from the N-terminus, the 85-residue chain is Large ribosomal subunit protein bL31B (85 aa).

The protein belongs to the bacterial ribosomal protein bL31 family. Type B subfamily. As to quaternary structure, part of the 50S ribosomal subunit.

This chain is Large ribosomal subunit protein bL31B, found in Aliivibrio salmonicida (strain LFI1238) (Vibrio salmonicida (strain LFI1238)).